The sequence spans 496 residues: Geranylhydroquinone 3''-hydroxylase CYP76B74 (496 aa).

Residues 3 to 23 (YTTILVGFLIGFVLFKALTRK) form a helical membrane-spanning segment. Heme is bound at residue cysteine 436.

Belongs to the cytochrome P450 family. Heme is required as a cofactor.

It localises to the endoplasmic reticulum membrane. The catalysed reaction is (2E)-geranylhydroquinone + reduced [NADPH--hemoprotein reductase] + O2 = (2Z)-3''-hydroxygeranylhydroquinone + oxidized [NADPH--hemoprotein reductase] + H2O + H(+). Its function is as follows. Hydroxylase involved in the biosynthesis pathway of the red naphthoquinone pigment shikonin. Catalyzes the key step C-3''-hydroxylation of the prenylated phenolic intermediate geranylhydroquinone to form 3''-hydroxygeranylhydroquinone. This chain is Geranylhydroquinone 3''-hydroxylase CYP76B74, found in Arnebia euchroma (Pink arnebia).